We begin with the raw amino-acid sequence, 879 residues long: Alanine--tRNA ligase (879 aa).

H570, H574, C672, and H676 together coordinate Zn(2+).

The protein belongs to the class-II aminoacyl-tRNA synthetase family. The cofactor is Zn(2+).

The protein localises to the cytoplasm. The enzyme catalyses tRNA(Ala) + L-alanine + ATP = L-alanyl-tRNA(Ala) + AMP + diphosphate. Its function is as follows. Catalyzes the attachment of alanine to tRNA(Ala) in a two-step reaction: alanine is first activated by ATP to form Ala-AMP and then transferred to the acceptor end of tRNA(Ala). Also edits incorrectly charged Ser-tRNA(Ala) and Gly-tRNA(Ala) via its editing domain. The protein is Alanine--tRNA ligase of Nitratidesulfovibrio vulgaris (strain ATCC 29579 / DSM 644 / CCUG 34227 / NCIMB 8303 / VKM B-1760 / Hildenborough) (Desulfovibrio vulgaris).